Reading from the N-terminus, the 458-residue chain is tRNA modification GTPase MnmE (458 aa).

Residues Arg-26, Glu-88, and Arg-127 each contribute to the (6S)-5-formyl-5,6,7,8-tetrahydrofolate site. Residues 224-378 (GLSTAIIGRP…IEDRINQLFF (155 aa)) form the TrmE-type G domain. Asn-234 contacts K(+). GTP contacts are provided by residues 234–239 (NVGKSS), 253–259 (TDIAGTT), and 278–281 (DTAG). Ser-238 provides a ligand contact to Mg(2+). Residues Thr-253, Ile-255, and Thr-258 each contribute to the K(+) site. Thr-259 provides a ligand contact to Mg(2+). Position 458 (Lys-458) interacts with (6S)-5-formyl-5,6,7,8-tetrahydrofolate.

The protein belongs to the TRAFAC class TrmE-Era-EngA-EngB-Septin-like GTPase superfamily. TrmE GTPase family. As to quaternary structure, homodimer. Heterotetramer of two MnmE and two MnmG subunits. The cofactor is K(+).

Its subcellular location is the cytoplasm. In terms of biological role, exhibits a very high intrinsic GTPase hydrolysis rate. Involved in the addition of a carboxymethylaminomethyl (cmnm) group at the wobble position (U34) of certain tRNAs, forming tRNA-cmnm(5)s(2)U34. The chain is tRNA modification GTPase MnmE from Streptococcus pyogenes serotype M5 (strain Manfredo).